A 684-amino-acid chain; its full sequence is Calpain-14 (684 aa).

Residues 43–336 (LFEDTSFPAT…FVLLVICKLT (294 aa)) form the Calpain catalytic domain. Catalysis depends on residues Cys101, His254, and Asn278. Residues 337–503 (PGLLSQEAAQ…KHIFYEIGSN (167 aa)) are domain III. A linker region spans residues 504–517 (SGVVFSKEIEDQNE). The domain IV stretch occupies residues 518–683 (RQDEFFTKFF…KPEWMMMALY (166 aa)). EF-hand domains are found at residues 557–592 (FSLE…LKLS), 586–621 (WKQL…AGIM), and 651–684 (LRVE…ALYS). Positions 570, 572, 574, 576, and 581 each coordinate Ca(2+).

It belongs to the peptidase C2 family. Not expressed in tissues tested.

Functionally, calcium-regulated non-lysosomal thiol-protease. The chain is Calpain-14 (CAPN14) from Homo sapiens (Human).